A 317-amino-acid chain; its full sequence is Melanocyte-stimulating hormone receptor (317 aa).

Topologically, residues 1 to 37 (MPMQGAQRRLLGSLNSTPTATPNLGLAANHTGAPCLE) are extracellular. Residue Asn-29 is glycosylated (N-linked (GlcNAc...) asparagine). A helical membrane pass occupies residues 38 to 63 (VSIPHGLFLSLGLVSLVENVLVVAAI). The Cytoplasmic segment spans residues 64 to 72 (AKNRNLHSP). The helical transmembrane segment at 73-93 (MYCFICCLALSDLLVSGSNML) threads the bilayer. Residues 94–118 (ETAVILLLEAGALATRASVVQQLQN) are Extracellular-facing. A helical transmembrane segment spans residues 119–140 (TIDVLTCSSMLCSLCFLGAIAV). At 141–163 (DRYVSIFYALRYHSIVTLPRARR) the chain is on the cytoplasmic side. The helical transmembrane segment at 164-183 (AIAAIWVASVLSSTLFIAYC) threads the bilayer. The Extracellular portion of the chain corresponds to 184–191 (DHAAVLLC). Residues 192-211 (LVVFFLAMLVLMAVLYVHML) form a helical membrane-spanning segment. Topologically, residues 212-240 (ARACQHAQGITRLHKRQLPAHQGFGLRGA) are cytoplasmic. The chain crosses the membrane as a helical span at residues 241-266 (ATLTILLGIFFLCWGPFFLHLMLVVL). At 267 to 279 (CPQHLTCSCIFKN) the chain is on the extracellular side. A helical membrane pass occupies residues 280–300 (FKVFLTLIICNTIIDPLIYAF). The Cytoplasmic portion of the chain corresponds to 301-317 (RSQELCRTLKEVLLCSW). The S-palmitoyl cysteine moiety is linked to residue Cys-315.

The protein belongs to the G-protein coupled receptor 1 family. In terms of assembly, interacts with MGRN1, but does not undergo MGRN1-mediated ubiquitination; this interaction competes with GNAS-binding and thus inhibits agonist-induced cAMP production. Interacts with OPN3; the interaction results in a decrease in MC1R-mediated cAMP signaling and ultimately a decrease in melanin production in melanocytes.

Its subcellular location is the cell membrane. Its function is as follows. Receptor for MSH (alpha, beta and gamma) and ACTH. The activity of this receptor is mediated by G proteins which activate adenylate cyclase. Mediates melanogenesis, the production of eumelanin (black/brown) and phaeomelanin (red/yellow), via regulation of cAMP signaling in melanocytes. The protein is Melanocyte-stimulating hormone receptor (MC1R) of Alouatta caraya (Black howler monkey).